The chain runs to 158 residues: 6,7-dimethyl-8-ribityllumazine synthase (158 aa).

5-amino-6-(D-ribitylamino)uracil is bound by residues Phe-22, 57–59, and 81–83; these read SYE and TVI. The active-site Proton donor is the His-89. Residue Phe-114 coordinates 5-amino-6-(D-ribitylamino)uracil. Arg-128 serves as a coordination point for (2S)-2-hydroxy-3-oxobutyl phosphate.

This sequence belongs to the DMRL synthase family. As to quaternary structure, forms an icosahedral capsid composed of 60 subunits, arranged as a dodecamer of pentamers.

It carries out the reaction (2S)-2-hydroxy-3-oxobutyl phosphate + 5-amino-6-(D-ribitylamino)uracil = 6,7-dimethyl-8-(1-D-ribityl)lumazine + phosphate + 2 H2O + H(+). The protein operates within cofactor biosynthesis; riboflavin biosynthesis; riboflavin from 2-hydroxy-3-oxobutyl phosphate and 5-amino-6-(D-ribitylamino)uracil: step 1/2. In terms of biological role, catalyzes the formation of 6,7-dimethyl-8-ribityllumazine by condensation of 5-amino-6-(D-ribitylamino)uracil with 3,4-dihydroxy-2-butanone 4-phosphate. This is the penultimate step in the biosynthesis of riboflavin. This Blochmanniella pennsylvanica (strain BPEN) protein is 6,7-dimethyl-8-ribityllumazine synthase.